The primary structure comprises 248 residues: PF03932 family protein CutC (248 aa).

This sequence belongs to the CutC family. Homodimer.

It localises to the cytoplasm. This Salmonella enteritidis PT4 (strain P125109) protein is PF03932 family protein CutC.